The primary structure comprises 294 residues: 4-hydroxy-tetrahydrodipicolinate synthase (294 aa).

Thr47 contributes to the pyruvate binding site. Tyr135 serves as the catalytic Proton donor/acceptor. Lys163 acts as the Schiff-base intermediate with substrate in catalysis. Thr205 contributes to the pyruvate binding site.

The protein belongs to the DapA family. As to quaternary structure, homotetramer; dimer of dimers.

The protein resides in the cytoplasm. It catalyses the reaction L-aspartate 4-semialdehyde + pyruvate = (2S,4S)-4-hydroxy-2,3,4,5-tetrahydrodipicolinate + H2O + H(+). It participates in amino-acid biosynthesis; L-lysine biosynthesis via DAP pathway; (S)-tetrahydrodipicolinate from L-aspartate: step 3/4. Its function is as follows. Catalyzes the condensation of (S)-aspartate-beta-semialdehyde [(S)-ASA] and pyruvate to 4-hydroxy-tetrahydrodipicolinate (HTPA). The sequence is that of 4-hydroxy-tetrahydrodipicolinate synthase from Rickettsia rickettsii.